The chain runs to 356 residues: MSTVTITDLARENVRNLTPYQSARRLGGNGDVWLNANEYPTAVEFQLTQQTLNRYPECQPKAVIENYAQYAGVKPEQVLVSRGADEGIELLIRAFCEPGKDAILYCPPTYGMYSVSAETIGVECRTVPTQDNWQLDLQGISDKLDGVKVVYVCSPNNPTGQLINPQDFRTLLELTRGKAIVVADEAYIEFCPQASLAGWLTEYPHLAILRTLSKAFALAGLRCGFTLANEEVINLLMKVIAPYPLSTPVADIAAQALSPQGIVAMRERVTQIIAEREYLIAALKEIPCVEQVFDSATNYILARFKASSAVFKSLWDQGIILRDQNKQPSLSGCLRITVGTREESQRVIDALRAEQV.

N6-(pyridoxal phosphate)lysine is present on lysine 214.

The protein belongs to the class-II pyridoxal-phosphate-dependent aminotransferase family. Histidinol-phosphate aminotransferase subfamily. As to quaternary structure, homodimer. Pyridoxal 5'-phosphate serves as cofactor.

The enzyme catalyses L-histidinol phosphate + 2-oxoglutarate = 3-(imidazol-4-yl)-2-oxopropyl phosphate + L-glutamate. It participates in amino-acid biosynthesis; L-histidine biosynthesis; L-histidine from 5-phospho-alpha-D-ribose 1-diphosphate: step 7/9. The polypeptide is Histidinol-phosphate aminotransferase (Shigella sonnei (strain Ss046)).